We begin with the raw amino-acid sequence, 405 residues long: S-adenosylmethionine synthase (405 aa).

Position 22 (histidine 22) interacts with ATP. Aspartate 24 serves as a coordination point for Mg(2+). Residue glutamate 50 coordinates K(+). L-methionine is bound by residues glutamate 63 and glutamine 107. Residues glutamine 107–arginine 117 form a flexible loop region. ATP contacts are provided by residues aspartate 184 to lysine 186, arginine 250 to phenylalanine 251, aspartate 259, arginine 265 to lysine 266, alanine 282, and lysine 286. Aspartate 259 serves as a coordination point for L-methionine. Lysine 290 is a binding site for L-methionine.

It belongs to the AdoMet synthase family. As to quaternary structure, homotetramer; dimer of dimers. Requires Mg(2+) as cofactor. The cofactor is K(+).

The protein localises to the cytoplasm. It carries out the reaction L-methionine + ATP + H2O = S-adenosyl-L-methionine + phosphate + diphosphate. It participates in amino-acid biosynthesis; S-adenosyl-L-methionine biosynthesis; S-adenosyl-L-methionine from L-methionine: step 1/1. Functionally, catalyzes the formation of S-adenosylmethionine (AdoMet) from methionine and ATP. The overall synthetic reaction is composed of two sequential steps, AdoMet formation and the subsequent tripolyphosphate hydrolysis which occurs prior to release of AdoMet from the enzyme. This chain is S-adenosylmethionine synthase, found in Roseiflexus castenholzii (strain DSM 13941 / HLO8).